The primary structure comprises 84 residues: U4-theraphotoxin-Hhn1aa (84 aa).

The first 22 residues, 1-22 (MKVTLIAILTCAAVLVLHTTAA), serve as a signal peptide directing secretion. A propeptide spanning residues 23–47 (EELEESQLMEVGMPDTELAAVDEER) is cleaved from the precursor. 2 disulfides stabilise this stretch: Cys-51-Cys-65 and Cys-55-Cys-76.

It belongs to the neurotoxin 12 (Hwtx-2) family. 02 (Hwtx-2) subfamily. In terms of tissue distribution, expressed by the venom gland.

It is found in the secreted. Postsynaptic neurotoxin. This chain is U4-theraphotoxin-Hhn1aa, found in Cyriopagopus hainanus (Chinese bird spider).